Reading from the N-terminus, the 109-residue chain is Synaptobrevin-1 (109 aa).

The interval 1–26 (MDAQGDAGAQGGSQGGPRPSNKRLQQ) is disordered. The Cytoplasmic segment spans residues 1-86 (MDAQGDAGAQ…KRKYWWKNIK (86 aa)). Positions 23-83 (RLQQTQAQVD…ATLKRKYWWK (61 aa)) constitute a v-SNARE coiled-coil homology domain. A helical; Anchor for type IV membrane protein transmembrane segment spans residues 87 to 107 (MMIIMCAIVVILIIIIVLWAG). The Extracellular portion of the chain corresponds to 108-109 (GK).

This sequence belongs to the synaptobrevin family. As to quaternary structure, part of the SNARE core complex containing ric-4/SNAP25, snb-1/VAMP2 and unc-64/STX1A. This complex binds to cpx-1/CPLX1. In terms of tissue distribution, expressed in the nervous system notably the nerve ring, ventral cord and dorsal cord.

The protein resides in the cytoplasmic vesicle. It localises to the secretory vesicle. Its subcellular location is the synaptic vesicle membrane. It is found in the cell membrane. The protein localises to the synapse. The protein resides in the synaptosome. Its function is as follows. Involved in the targeting and/or fusion of transport vesicles to their target membrane. Acts in neuronal exocytosis of synaptic transmission. Likely to have a role in cholinergic transmisson. Required for viability, coordinated movement and M3 pharynx motor neuron function. This is Synaptobrevin-1 from Caenorhabditis elegans.